Reading from the N-terminus, the 543-residue chain is CTP synthase (543 aa).

The segment at Met-1–Leu-265 is amidoligase domain. Ser-13 contributes to the CTP binding site. UTP is bound at residue Ser-13. ATP is bound by residues Ser-14–Ile-19 and Asp-71. Residues Asp-71 and Glu-139 each coordinate Mg(2+). CTP-binding positions include Asp-146–Glu-148, Lys-186–Gln-191, and Lys-222. Residues Lys-186–Gln-191 and Lys-222 contribute to the UTP site. A Glutamine amidotransferase type-1 domain is found at Thr-290–Lys-541. Gly-351 is an L-glutamine binding site. Residue Cys-378 is the Nucleophile; for glutamine hydrolysis of the active site. Residues Leu-379 to Gln-382, Glu-402, and Arg-469 contribute to the L-glutamine site. Catalysis depends on residues His-514 and Glu-516.

Belongs to the CTP synthase family. In terms of assembly, homotetramer.

The catalysed reaction is UTP + L-glutamine + ATP + H2O = CTP + L-glutamate + ADP + phosphate + 2 H(+). It carries out the reaction L-glutamine + H2O = L-glutamate + NH4(+). It catalyses the reaction UTP + NH4(+) + ATP = CTP + ADP + phosphate + 2 H(+). It participates in pyrimidine metabolism; CTP biosynthesis via de novo pathway; CTP from UDP: step 2/2. With respect to regulation, allosterically activated by GTP, when glutamine is the substrate; GTP has no effect on the reaction when ammonia is the substrate. The allosteric effector GTP functions by stabilizing the protein conformation that binds the tetrahedral intermediate(s) formed during glutamine hydrolysis. Inhibited by the product CTP, via allosteric rather than competitive inhibition. Catalyzes the ATP-dependent amination of UTP to CTP with either L-glutamine or ammonia as the source of nitrogen. Regulates intracellular CTP levels through interactions with the four ribonucleotide triphosphates. The sequence is that of CTP synthase from Pseudomonas savastanoi pv. phaseolicola (strain 1448A / Race 6) (Pseudomonas syringae pv. phaseolicola (strain 1448A / Race 6)).